The following is a 277-amino-acid chain: Polyamine aminopropyltransferase (277 aa).

The PABS domain occupies 2 to 235 (ELWFTENQDE…SLWTFTMGSK (234 aa)). S-methyl-5'-thioadenosine is bound at residue Gln31. His62 and Asp86 together coordinate spermidine. S-methyl-5'-thioadenosine is bound by residues Glu106 and 137–138 (DG). Asp155 serves as the catalytic Proton acceptor. 155 to 158 (DSTD) serves as a coordination point for spermidine. Pro162 contacts S-methyl-5'-thioadenosine.

It belongs to the spermidine/spermine synthase family. In terms of assembly, homodimer or homotetramer.

It is found in the cytoplasm. It catalyses the reaction S-adenosyl 3-(methylsulfanyl)propylamine + putrescine = S-methyl-5'-thioadenosine + spermidine + H(+). It participates in amine and polyamine biosynthesis; spermidine biosynthesis; spermidine from putrescine: step 1/1. In terms of biological role, catalyzes the irreversible transfer of a propylamine group from the amino donor S-adenosylmethioninamine (decarboxy-AdoMet) to putrescine (1,4-diaminobutane) to yield spermidine. In Thermoanaerobacter pseudethanolicus (strain ATCC 33223 / 39E) (Clostridium thermohydrosulfuricum), this protein is Polyamine aminopropyltransferase.